Here is a 1226-residue protein sequence, read N- to C-terminus: Arf guanine nucleotide exchange factor SYT1 (1226 aa).

Disordered regions lie at residues 17–39 (HSNDKNGNKKGGSNVSTGIDKLR) and 113–158 (RNGQ…RNSK). The segment covering 131–142 (SIEKVPKPDGER) has biased composition (basic and acidic residues). At Thr277 the chain carries Phosphothreonine. 3 disordered regions span residues 311 to 405 (NSLM…TGMS), 954 to 1022 (STGS…NEDY), and 1178 to 1198 (LEHGKGEEEGQGNNDDSDGID). Residues 349–360 (LSRSRSQSTSFV) are compositionally biased toward polar residues. Ser369 carries the phosphoserine modification. A compositionally biased stretch (polar residues) spans 386 to 405 (GPTSVYNNKSNANSTITGMS). One can recognise an SEC7 domain in the interval 405-620 (SRRSSSIVNA…TYFYENVTAK (216 aa)). The 231-residue stretch at 844–1074 (ILQMGAIMNL…DSINLFSAYD (231 aa)) folds into the PH domain. 2 stretches are compositionally biased toward low complexity: residues 956–969 (GSHTSNTTAASSSA) and 994–1017 (SSVSNGESDNDSVSSSDNQLSSND).

Its subcellular location is the cytoplasm. With respect to regulation, inhibited by brefeldin A. Functionally, guanine nucleotide exchange factor for Arf GTPases, stimulating the nucleotide exchange from the GDP-bound to the GTP-bound form. Catalyzes both the GDP release by and the GTP binding to ARF2. Has no exchange activity on Rab GTPases. Involved in vesicular transport. This is Arf guanine nucleotide exchange factor SYT1 (SYT1) from Saccharomyces cerevisiae (strain ATCC 204508 / S288c) (Baker's yeast).